The chain runs to 239 residues: DNA repair protein RecO (239 aa).

The protein belongs to the RecO family.

Functionally, involved in DNA repair and RecF pathway recombination. This is DNA repair protein RecO from Christiangramia forsetii (strain DSM 17595 / CGMCC 1.15422 / KT0803) (Gramella forsetii).